The chain runs to 232 residues: MNPEGENELQVYLRDGDLRVMALGLRHGLRRGLRRGLRRGLRRTGDLRDGDLRLDGDLRDGDLDLLDGDLRDGDLRLDGDLDLLEGDLRDGDLDLLDGDLHRDGDVDRLEGDLRDGDLRLDGDFLVLPHTTAWVFLPNSFNFLEVQTLFAPFSYWLHINGIVFINSKILFIKSPQLPSYFAMALRQCKSSWLGHTSPANRFCIVVQINDQLGLKNSINSRRSALWSGGTASC.

This is an uncharacterized protein from Aedes vexans (Inland floodwater mosquito).